The chain runs to 219 residues: Lipid transferase CIDEB (219 aa).

The CIDE-N domain occupies 34-110; it reads PQRPFRVCDH…VLQSGQSWSP (77 aa).

This sequence belongs to the CIDE family. Interacts with DFFA. Interacts with DFFB; inhibited by DFFB. Interacts with APOB. Interacts with PREB/SEC12; facilitating loading of SCAP-SREBP into COPII vesicles. As to quaternary structure, (Microbial infection) Interacts (via N-terminus) with HCV non-structural protein 5A (via N-terminus); this interaction seems to regulate the association of HCV particles with ApoE. In terms of tissue distribution, highly expressed in liver and small intestine and, at lower levels, in colon, kidney and spleen.

The protein resides in the lipid droplet. It localises to the endoplasmic reticulum membrane. Its subcellular location is the golgi apparatus. The protein localises to the cytoplasmic vesicle. It is found in the COPI-coated vesicle. Functionally, lipid transferase specifically expressed in hepatocytes, which promotes unilocular lipid droplet formation by mediating lipid droplet fusion. Lipid droplet fusion promotes their enlargement, restricting lipolysis and favoring lipid storage. Localizes on the lipid droplet surface, at focal contact sites between lipid droplets, and mediates atypical lipid droplet fusion by promoting directional net neutral lipid transfer from the smaller to larger lipid droplets. The transfer direction may be driven by the internal pressure difference between the contacting lipid droplet pair. Promotes lipid exchange and lipid droplet fusion in both small and large lipid droplet-containing hepatocytes. In addition to its role in lipid droplet fusion, also involved in cytoplasmic vesicle biogenesis and transport. Required for very-low-density lipoprotein (VLDL) lipidation and maturation. Probably involved in the biogenesis of VLDL transport vesicles by forming a COPII vesicle coat and facilitating the formation of endoplasmic reticulum-derived large vesicles. Also involved in sterol-regulated export of the SCAP-SREBP complex, composed of SCAP, SREBF1/SREBP1 and SREBF2/SREBP2, by promoting loading of SCAP-SREBP into COPII vesicles. May also activate apoptosis. (Microbial infection) Involved in Hepatatis C virus (HCV) assembly and required for HCV entry into hepatocytes. The polypeptide is Lipid transferase CIDEB (Homo sapiens (Human)).